A 142-amino-acid polypeptide reads, in one-letter code: ATP synthase F(0) complex subunit C3, mitochondrial (142 aa).

The N-terminal 67 residues, 1 to 67 (MFACAKLACT…REFQTSAISR (67 aa)), are a transit peptide targeting the mitochondrion. The chain crosses the membrane as a helical span at residues 83–103 (VGVAGSGAGIGTVFGSLIIGY). Lysine 110 is modified (N6,N6,N6-trimethyllysine). Residues 118–138 (ILGFALSEAMGLFCLMVAFLI) traverse the membrane as a helical segment.

This sequence belongs to the ATPase C chain family. As to quaternary structure, F-type ATPases have 2 components, CF(1) - the catalytic core - and CF(0) - the membrane proton channel. CF(1) has five subunits: alpha(3), beta(3), gamma(1), delta(1), epsilon(1). CF(0) has three main subunits: a, b and c. Interacts with TMEM70 and TMEM242. In terms of processing, trimethylated by ATPSCKMT at Lys-110. Methylation is required for proper incorporation of the C subunit into the ATP synthase complex and mitochondrial respiration.

It is found in the mitochondrion membrane. In terms of biological role, mitochondrial membrane ATP synthase (F(1)F(0) ATP synthase or Complex V) produces ATP from ADP in the presence of a proton gradient across the membrane which is generated by electron transport complexes of the respiratory chain. F-type ATPases consist of two structural domains, F(1) - containing the extramembraneous catalytic core and F(0) - containing the membrane proton channel, linked together by a central stalk and a peripheral stalk. During catalysis, ATP synthesis in the catalytic domain of F(1) is coupled via a rotary mechanism of the central stalk subunits to proton translocation. Part of the complex F(0) domain. A homomeric c-ring of probably 10 subunits is part of the complex rotary element. In Pongo abelii (Sumatran orangutan), this protein is ATP synthase F(0) complex subunit C3, mitochondrial.